The sequence spans 347 residues: Protein XRP2 (347 aa).

Basic residues predominate over residues 1–11 (MGCCFTKRRKS). The tract at residues 1–22 (MGCCFTKRRKSEKAEGEEEQPK) is disordered. Gly2 carries the N-myristoyl glycine lipid modification. A lipid anchor (S-palmitoyl cysteine) is attached at Cys3. The 156-residue stretch at 21 to 176 (PKLYSWDQRE…IWSHVHDFTP (156 aa)) folds into the C-CAP/cofactor C-like domain. GTP contacts are provided by residues 95-96 (GS) and 112-115 (QQFR).

It belongs to the TBCC family. Found in a complex with ARL3, RP2 and UNC119 (or UNC119B); RP2 induces hydrolysis of GTP ARL3 in the complex, leading to the release of UNC119 (or UNC119B). Interacts with ARL3; interaction is direct and stimulated with the activated GTP-bound form of ARL3. In terms of processing, myristoylated on Gly-2; which may be required for membrane targeting. Post-translationally, palmitoylated on Cys-3; which may be required for plasma membrane targeting. In terms of tissue distribution, retina (at protein level).

The protein resides in the cell membrane. The protein localises to the cell projection. Its subcellular location is the cilium. Its function is as follows. Acts as a GTPase-activating protein (GAP) involved in trafficking between the Golgi and the ciliary membrane. Involved in localization of proteins, such as NPHP3, to the cilium membrane by inducing hydrolysis of GTP ARL3, leading to the release of UNC119 (or UNC119B). Acts as a GTPase-activating protein (GAP) for tubulin in concert with tubulin-specific chaperone C, but does not enhance tubulin heterodimerization. Acts as a guanine nucleotide dissociation inhibitor towards ADP-ribosylation factor-like proteins. In Mus musculus (Mouse), this protein is Protein XRP2 (Rp2).